A 441-amino-acid chain; its full sequence is Damage-control phosphatase ARMT1 (441 aa).

Position 2 is an N-acetylalanine (Ala-2). At Lys-40 the chain carries N6-acetyllysine. The residue at position 102 (Ser-102) is a Phosphoserine. Mn(2+) is bound by residues Asp-253 and Asn-254. 253-254 (DN) contacts substrate. S-adenosyl-L-methionine-binding residues include Glu-258 and Asp-291. Asp-291 provides a ligand contact to Mn(2+). Substrate-binding positions include 367 to 371 (DLNYR) and Lys-404. Positions 401–404 (RTLK) match the Subfamily III RTxK motif motif.

This sequence belongs to the damage-control phosphatase family. Sugar phosphate phosphatase III subfamily. Requires Mn(2+) as cofactor. Ni(2+) is required as a cofactor. Post-translationally, automethylated.

It catalyses the reaction beta-D-fructose 1-phosphate + H2O = D-fructose + phosphate. The catalysed reaction is beta-D-fructose 6-phosphate = dihydroxyacetone + D-glyceraldehyde 3-phosphate. It carries out the reaction L-glutamyl-[protein] + S-adenosyl-L-methionine = [protein]-L-glutamate 5-O-methyl ester + S-adenosyl-L-homocysteine. Its function is as follows. Metal-dependent phosphatase that shows phosphatase activity against several substrates, including fructose-1-phosphate and fructose-6-phosphate. Its preference for fructose-1-phosphate, a strong glycating agent that causes DNA damage rather than a canonical yeast metabolite, suggests a damage-control function in hexose phosphate metabolism. Has also been shown to have O-methyltransferase activity that methylates glutamate residues of target proteins to form gamma-glutamyl methyl ester residues. Possibly methylates PCNA, suggesting it is involved in the DNA damage response. The protein is Damage-control phosphatase ARMT1 of Bos taurus (Bovine).